The sequence spans 195 residues: Probable GTP-binding protein EngB (195 aa).

The EngB-type G domain maps to 22-195 (GLPEIALAGR…WGAIKKMISR (174 aa)). GTP is bound by residues 30-37 (GRSNVGKS), 57-61 (GKTQT), 75-78 (DVPG), 142-145 (TKAD), and 174-176 (FSS). Mg(2+) contacts are provided by serine 37 and threonine 59.

This sequence belongs to the TRAFAC class TrmE-Era-EngA-EngB-Septin-like GTPase superfamily. EngB GTPase family. The cofactor is Mg(2+).

Necessary for normal cell division and for the maintenance of normal septation. The sequence is that of Probable GTP-binding protein EngB from Bacillus velezensis (strain DSM 23117 / BGSC 10A6 / LMG 26770 / FZB42) (Bacillus amyloliquefaciens subsp. plantarum).